Consider the following 88-residue polypeptide: Small ribosomal subunit protein uS17 (88 aa).

This sequence belongs to the universal ribosomal protein uS17 family. Part of the 30S ribosomal subunit.

In terms of biological role, one of the primary rRNA binding proteins, it binds specifically to the 5'-end of 16S ribosomal RNA. The protein is Small ribosomal subunit protein uS17 of Prochlorococcus marinus (strain SARG / CCMP1375 / SS120).